A 380-amino-acid polypeptide reads, in one-letter code: MAPNLRKSHPLLKTINNSLIDLPTPSNISAWWNFGSLLGICLATQILTGLLLAAHYTADTTLAFSSVAHTCRNVQYGWLIRNLHANGASFFFICIYLHIGRGLYYGSYLYKETWNTGIILLLTLMATAFVGYVLPWGQMSFWGATVITNLFSAIPYIGQTLVEWAWGGFSVDNPTLTRFFTLHFLLPFMIAGLTLIHLTFLHESGSNNPLGIVANSDKIPFHPYYSTKDILGFILLLLPLTALALFSPNLLGDPENFTPANPLVTPPHIKPEWYFLFAYAILRSIPNKLGGVLALAASVLILFLIPLLHKSKQRTMTFRPLSQLLFWTLVANLTILTWIGSQPVEHPFIIIGQLASLTYFTILLILFPLIGTLENKMLNH.

The next 4 helical transmembrane spans lie at Phe-34–Ala-54, Trp-78–Ile-99, Trp-114–Leu-134, and Phe-179–Thr-199. Heme b is bound by residues His-84 and His-98. Residues His-183 and His-197 each coordinate heme b. Residue His-202 participates in a ubiquinone binding. A run of 4 helical transmembrane segments spans residues Thr-227–Ser-247, Leu-289–His-309, Leu-321–Ser-341, and Phe-348–Pro-368.

It belongs to the cytochrome b family. In terms of assembly, the cytochrome bc1 complex contains 11 subunits: 3 respiratory subunits (MT-CYB, CYC1 and UQCRFS1), 2 core proteins (UQCRC1 and UQCRC2) and 6 low-molecular weight proteins (UQCRH/QCR6, UQCRB/QCR7, UQCRQ/QCR8, UQCR10/QCR9, UQCR11/QCR10 and a cleavage product of UQCRFS1). This cytochrome bc1 complex then forms a dimer. It depends on heme b as a cofactor.

It is found in the mitochondrion inner membrane. Functionally, component of the ubiquinol-cytochrome c reductase complex (complex III or cytochrome b-c1 complex) that is part of the mitochondrial respiratory chain. The b-c1 complex mediates electron transfer from ubiquinol to cytochrome c. Contributes to the generation of a proton gradient across the mitochondrial membrane that is then used for ATP synthesis. In Eudyptes chrysolophus (Macaroni penguin), this protein is Cytochrome b (MT-CYB).